Reading from the N-terminus, the 345-residue chain is Protein RecA (345 aa).

67–74 (GPESSGKT) is an ATP binding site.

This sequence belongs to the RecA family.

The protein localises to the cytoplasm. Its function is as follows. Can catalyze the hydrolysis of ATP in the presence of single-stranded DNA, the ATP-dependent uptake of single-stranded DNA by duplex DNA, and the ATP-dependent hybridization of homologous single-stranded DNAs. It interacts with LexA causing its activation and leading to its autocatalytic cleavage. The polypeptide is Protein RecA (Acidothermus cellulolyticus (strain ATCC 43068 / DSM 8971 / 11B)).